Consider the following 946-residue polypeptide: Bifunctional glutamine synthetase adenylyltransferase/adenylyl-removing enzyme (946 aa).

An adenylyl removase region spans residues 1-440 (MKPLSSPLQQ…VFNELIGDDE (440 aa)). The adenylyl transferase stretch occupies residues 449–946 (SEQWRELWQD…ASWQKWLVEE (498 aa)).

It belongs to the GlnE family. It depends on Mg(2+) as a cofactor.

It catalyses the reaction [glutamine synthetase]-O(4)-(5'-adenylyl)-L-tyrosine + phosphate = [glutamine synthetase]-L-tyrosine + ADP. It carries out the reaction [glutamine synthetase]-L-tyrosine + ATP = [glutamine synthetase]-O(4)-(5'-adenylyl)-L-tyrosine + diphosphate. In terms of biological role, involved in the regulation of glutamine synthetase GlnA, a key enzyme in the process to assimilate ammonia. When cellular nitrogen levels are high, the C-terminal adenylyl transferase (AT) inactivates GlnA by covalent transfer of an adenylyl group from ATP to specific tyrosine residue of GlnA, thus reducing its activity. Conversely, when nitrogen levels are low, the N-terminal adenylyl removase (AR) activates GlnA by removing the adenylyl group by phosphorolysis, increasing its activity. The regulatory region of GlnE binds the signal transduction protein PII (GlnB) which indicates the nitrogen status of the cell. This chain is Bifunctional glutamine synthetase adenylyltransferase/adenylyl-removing enzyme, found in Shigella boydii serotype 4 (strain Sb227).